A 107-amino-acid polypeptide reads, in one-letter code: Protein TAP1 (107 aa).

An N-terminal signal peptide occupies residues 1–23; the sequence is MESKRVDVLVGLMLIMAIFGVHS.

In terms of tissue distribution, stamen.

The chain is Protein TAP1 (TAP1) from Antirrhinum majus (Garden snapdragon).